We begin with the raw amino-acid sequence, 458 residues long: Tubulin beta chain (458 aa).

GTP-binding residues include Q11, E69, S138, G142, T143, G144, N204, and N226. E69 serves as a coordination point for Mg(2+). Residues 426–458 (EAATVEGEEEEDEYAEGGVVNGDQSYDEPYQAA) form a disordered region. Acidic residues predominate over residues 431–440 (EGEEEEDEYA).

This sequence belongs to the tubulin family. In terms of assembly, dimer of alpha and beta chains. A typical microtubule is a hollow water-filled tube with an outer diameter of 25 nm and an inner diameter of 15 nM. Alpha-beta heterodimers associate head-to-tail to form protofilaments running lengthwise along the microtubule wall with the beta-tubulin subunit facing the microtubule plus end conferring a structural polarity. Microtubules usually have 13 protofilaments but different protofilament numbers can be found in some organisms and specialized cells. Mg(2+) is required as a cofactor.

The protein localises to the cytoplasm. The protein resides in the cytoskeleton. Functionally, tubulin is the major constituent of microtubules, a cylinder consisting of laterally associated linear protofilaments composed of alpha- and beta-tubulin heterodimers. Microtubules grow by the addition of GTP-tubulin dimers to the microtubule end, where a stabilizing cap forms. Below the cap, tubulin dimers are in GDP-bound state, owing to GTPase activity of alpha-tubulin. The polypeptide is Tubulin beta chain (TUBB1) (Pyropia yezoensis (Susabi-nori)).